Reading from the N-terminus, the 219-residue chain is 7-cyano-7-deazaguanine synthase (219 aa).

9–19 (YSGGMDSFTVL) lines the ATP pocket. Cys185, Cys193, Cys196, and Cys199 together coordinate Zn(2+).

It belongs to the QueC family. Requires Zn(2+) as cofactor.

The enzyme catalyses 7-carboxy-7-deazaguanine + NH4(+) + ATP = 7-cyano-7-deazaguanine + ADP + phosphate + H2O + H(+). It participates in purine metabolism; 7-cyano-7-deazaguanine biosynthesis. Catalyzes the ATP-dependent conversion of 7-carboxy-7-deazaguanine (CDG) to 7-cyano-7-deazaguanine (preQ(0)). This is 7-cyano-7-deazaguanine synthase from Marinomonas sp. (strain MWYL1).